We begin with the raw amino-acid sequence, 422 residues long: Histidine--tRNA ligase (422 aa).

This sequence belongs to the class-II aminoacyl-tRNA synthetase family. Homodimer.

The protein localises to the cytoplasm. The enzyme catalyses tRNA(His) + L-histidine + ATP = L-histidyl-tRNA(His) + AMP + diphosphate + H(+). The sequence is that of Histidine--tRNA ligase from Mycolicibacterium vanbaalenii (strain DSM 7251 / JCM 13017 / BCRC 16820 / KCTC 9966 / NRRL B-24157 / PYR-1) (Mycobacterium vanbaalenii).